The chain runs to 272 residues: MPKITKIEVQKKNKERFNLYLDEEFEMGIDMDTYVHFNLKKGQIVDAADMEKIQKYDQYRQAVNVAIQFLSYRKRTDHEVIQHLQKKEISESVIASVIDYCHEQRLIDHEDYANSLKNTMILTTDKGPGIFRQKLRDAGVEQTIIDVYAERYENEQPMEDIIKVANKILKQKKGPTVKRKEKLSQALMQKGYSFEIIKVVMDEMDFSQPEAELDGLLQQELEKVYNKYSRKFSGRKLINKTIEGLMRKGYKYDKIKAKLEESGIVDGTEEIE.

Belongs to the RecX family.

The protein localises to the cytoplasm. Its function is as follows. Modulates RecA activity. This chain is Regulatory protein RecX, found in Staphylococcus saprophyticus subsp. saprophyticus (strain ATCC 15305 / DSM 20229 / NCIMB 8711 / NCTC 7292 / S-41).